We begin with the raw amino-acid sequence, 164 residues long: 3-dehydroquinate dehydratase (164 aa).

The active-site Proton acceptor is the tyrosine 22. Substrate contacts are provided by asparagine 73, histidine 79, and aspartate 86. The active-site Proton donor is histidine 99. Substrate contacts are provided by residues 100-101 (IS) and arginine 110.

It belongs to the type-II 3-dehydroquinase family. As to quaternary structure, homododecamer.

The catalysed reaction is 3-dehydroquinate = 3-dehydroshikimate + H2O. The protein operates within metabolic intermediate biosynthesis; chorismate biosynthesis; chorismate from D-erythrose 4-phosphate and phosphoenolpyruvate: step 3/7. Its function is as follows. Catalyzes a trans-dehydration via an enolate intermediate. The chain is 3-dehydroquinate dehydratase from Aliarcobacter butzleri (strain RM4018) (Arcobacter butzleri).